The chain runs to 242 residues: ATP synthase subunit b 2 (242 aa).

Residues 4–24 (LLAISSLTLLASLVLLVVSPA) traverse the membrane as a helical segment. The interval 43-74 (ADSEDGDHDHDHEGDDHGHDEAAGDEHGHGDG) is disordered. Positions 49–74 (DHDHDHEGDDHGHDEAAGDEHGHGDG) are enriched in basic and acidic residues.

It belongs to the ATPase B chain family. As to quaternary structure, F-type ATPases have 2 components, F(1) - the catalytic core - and F(0) - the membrane proton channel. F(1) has five subunits: alpha(3), beta(3), gamma(1), delta(1), epsilon(1). F(0) has three main subunits: a(1), b(2) and c(10-14). The alpha and beta chains form an alternating ring which encloses part of the gamma chain. F(1) is attached to F(0) by a central stalk formed by the gamma and epsilon chains, while a peripheral stalk is formed by the delta and b chains.

The protein resides in the cell inner membrane. Its function is as follows. F(1)F(0) ATP synthase produces ATP from ADP in the presence of a proton or sodium gradient. F-type ATPases consist of two structural domains, F(1) containing the extramembraneous catalytic core and F(0) containing the membrane proton channel, linked together by a central stalk and a peripheral stalk. During catalysis, ATP synthesis in the catalytic domain of F(1) is coupled via a rotary mechanism of the central stalk subunits to proton translocation. Functionally, component of the F(0) channel, it forms part of the peripheral stalk, linking F(1) to F(0). This is ATP synthase subunit b 2 from Rhodopirellula baltica (strain DSM 10527 / NCIMB 13988 / SH1).